The chain runs to 242 residues: NAD(P)H-hydrate epimerase (242 aa).

The 211-residue stretch at 11–221 (AKALDAELMS…KVITKKFNLS (211 aa)) folds into the YjeF N-terminal domain. Position 61-65 (61-65 (NNGGD)) interacts with (6S)-NADPHX. Positions 62 and 128 each coordinate K(+). (6S)-NADPHX contacts are provided by residues 132–138 (GFSFKGP) and aspartate 161. Serine 164 lines the K(+) pocket.

It belongs to the NnrE/AIBP family. K(+) serves as cofactor.

It localises to the cytoplasm. The protein resides in the mitochondrion. The protein localises to the nucleus. The catalysed reaction is (6R)-NADHX = (6S)-NADHX. The enzyme catalyses (6R)-NADPHX = (6S)-NADPHX. Catalyzes the epimerization of the S- and R-forms of NAD(P)HX, a damaged form of NAD(P)H that is a result of enzymatic or heat-dependent hydration. This is a prerequisite for the S-specific NAD(P)H-hydrate dehydratase to allow the repair of both epimers of NAD(P)HX. May have a role in meiosis. The protein is NAD(P)H-hydrate epimerase (mug182) of Schizosaccharomyces pombe (strain 972 / ATCC 24843) (Fission yeast).